Reading from the N-terminus, the 722-residue chain is Transmembrane channel-like protein 8 (722 aa).

A disordered region spans residues 1–21 (MFRQWSVQSGPAPRRPESQAA). Over 1–118 (MFRQWSVQSG…GIQSYFTFLR (118 aa)) the chain is Cytoplasmic. A phosphoserine mark is found at Ser-6 and Ser-18. Residues 119 to 139 (FLLLLNLLTMLLTACFVLLPL) form a helical membrane-spanning segment. Residues 140–204 (VWLRPPELGP…AGPESSSEYS (65 aa)) are Lumenal-facing. N-linked (GlcNAc...) asparagine glycosylation is present at Asn-184. Residues 205–225 (IRLAYLLSPMVCLLLCFCGIL) traverse the membrane as a helical segment. Over 226 to 307 (QRMAEGLPQQ…CRLLTYLRTN (82 aa)) the chain is Cytoplasmic. A helical transmembrane segment spans residues 308–328 (ILIVLLVVGAISAIFWATKYS). Residues 329-375 (QDNKEESLFLVLQYLPPGVISLVNFLGPQLFTVLIQLENYPPGTEVN) lie on the Lumenal side of the membrane. Residues 366-534 (ENYPPGTEVN…SPRRFRASSS (169 aa)) are TMC domain. Residue Asn-375 is glycosylated (N-linked (GlcNAc...) asparagine). A helical membrane pass occupies residues 376–396 (LTLIWCVVLKLASLGMFSFSL). Residues 397-430 (GQTVLCIGRNKTSCESYGYNACDYQCWENSVGEE) lie on the Cytoplasmic side of the membrane. Residues 431–451 (LYKLIIFNFLLTVAFAFLVSL) form a helical membrane-spanning segment. Topologically, residues 452–492 (PRRLLVERFSGWFWTWLDREEFLVPKNVLDIVAAQTVTWMG) are lumenal. A helical transmembrane segment spans residues 493-513 (LFYCPLLPLLNSVFLFLTFYI). At 514–536 (KKYTLLRNSRASPRRFRASSSTF) the chain is on the cytoplasmic side. Residues 537–557 (FFHLVLLLGLLLAAVPLAYVI) traverse the membrane as a helical segment. The Lumenal segment spans residues 558–598 (SSTHSSWDCGLFTNYSAPWQVVPELVALQLPLPSQRALRYL). Asn-571 carries an N-linked (GlcNAc...) asparagine glycan. Residues 599 to 619 (SSHAFSFPLLILLSIVLTVCI) traverse the membrane as a helical segment. Over 620-722 (SQSRANARAI…RFHFPSRTEL (103 aa)) the chain is Cytoplasmic. A phosphoserine mark is found at Ser-658, Ser-663, and Ser-673. The tract at residues 658–722 (SPEPGSPHSR…RFHFPSRTEL (65 aa)) is disordered. A compositionally biased stretch (pro residues) spans 678-687 (FPCPGSPGPR). Residues 689–712 (PRLAPSNRLSSSSLGAPSASVPAS) are compositionally biased toward low complexity. The residue at position 698 (Ser-698) is a Phosphoserine.

The protein belongs to the TMC family. In terms of assembly, interacts with TMC6. Interacts and forms a complex with TMC6 and CIB1; the interaction stabilizes each component of the complex. Interacts and forms a complex with TMC6 and SLC30A1/ZNT1; the interaction regulates zinc transport into the ER. Interacts with TRADD; the interaction competes with TRADD/RIPK1/TRAF2/cIAPs complex I formation and facilites complex II formation. In terms of tissue distribution, expressed in thymus, lung, prostate, placenta, testis and spleen. Expressed in lymphocytes and peripheral lymphocytes.

The protein resides in the endoplasmic reticulum membrane. It is found in the golgi apparatus membrane. The protein localises to the nucleus membrane. Acts as a regulatory protein involved in the regulation of numerous cellular processes. Together with its homolog TMC6/EVER1, forms a complex with calcium-binding protein CIB1 in lymphocytes and keratynocytes where TMC6 and TMC8 stabilize CIB1 levels and reciprocally. Together with TMC6, also forms a complex with and activates zinc transporter ZNT1 at the ER membrane of keratynocytes, thereby facilitating zinc uptake into the ER. Also inhibits receptor-mediated calcium release from ER stores and calcium activated and volume regulated chloride channels. Down-regulates the activity of transcription factors induced by zinc and cytokines. Also sequesters TRADD which impairs the recruitment of TRAF2 and RIPK1 in the pro-survival complex I and promotes proapoptotic complex II formation, and may therefore be involved in TNF-induced cell death/survival decisions. In Mus musculus (Mouse), this protein is Transmembrane channel-like protein 8.